Reading from the N-terminus, the 629-residue chain is tRNA uridine 5-carboxymethylaminomethyl modification enzyme MnmG (629 aa).

Residue 13–18 coordinates FAD; sequence GGGHAG. Position 273–287 (273–287) interacts with NAD(+); sequence GPRYCPSIEDKVNRF.

This sequence belongs to the MnmG family. Homodimer. Heterotetramer of two MnmE and two MnmG subunits. Requires FAD as cofactor.

The protein resides in the cytoplasm. NAD-binding protein involved in the addition of a carboxymethylaminomethyl (cmnm) group at the wobble position (U34) of certain tRNAs, forming tRNA-cmnm(5)s(2)U34. This is tRNA uridine 5-carboxymethylaminomethyl modification enzyme MnmG from Hahella chejuensis (strain KCTC 2396).